Reading from the N-terminus, the 614-residue chain is Phosphomethylpyrimidine synthase (614 aa).

Substrate contacts are provided by residues N230, M259, Y288, H324, 344–346, 385–388, and E424; these read SRG and DGLR. H428 contacts Zn(2+). Residue Y451 coordinates substrate. Residue H492 participates in Zn(2+) binding. Positions 572, 575, and 580 each coordinate [4Fe-4S] cluster.

This sequence belongs to the ThiC family. Homodimer. It depends on [4Fe-4S] cluster as a cofactor.

The catalysed reaction is 5-amino-1-(5-phospho-beta-D-ribosyl)imidazole + S-adenosyl-L-methionine = 4-amino-2-methyl-5-(phosphooxymethyl)pyrimidine + CO + 5'-deoxyadenosine + formate + L-methionine + 3 H(+). It participates in cofactor biosynthesis; thiamine diphosphate biosynthesis. Catalyzes the synthesis of the hydroxymethylpyrimidine phosphate (HMP-P) moiety of thiamine from aminoimidazole ribotide (AIR) in a radical S-adenosyl-L-methionine (SAM)-dependent reaction. This is Phosphomethylpyrimidine synthase from Stenotrophomonas maltophilia (strain K279a).